Consider the following 155-residue polypeptide: MAKGEGKVVAQNKKARHDYTIVDTLEAGMVLTGTEIKSVRAARINLKDGFAQVKNGEVWLSNVHIAPYEEGNIWNQEPERRRKLLLHKKQIQKLEQETKGTGMTLVPLKVYIKDGYAKLLLGLAKGKHDYDKRESIKRREQNRDIARVMKAVNQR.

This sequence belongs to the SmpB family.

It is found in the cytoplasm. Required for rescue of stalled ribosomes mediated by trans-translation. Binds to transfer-messenger RNA (tmRNA), required for stable association of tmRNA with ribosomes. tmRNA and SmpB together mimic tRNA shape, replacing the anticodon stem-loop with SmpB. tmRNA is encoded by the ssrA gene; the 2 termini fold to resemble tRNA(Ala) and it encodes a 'tag peptide', a short internal open reading frame. During trans-translation Ala-aminoacylated tmRNA acts like a tRNA, entering the A-site of stalled ribosomes, displacing the stalled mRNA. The ribosome then switches to translate the ORF on the tmRNA; the nascent peptide is terminated with the 'tag peptide' encoded by the tmRNA and targeted for degradation. The ribosome is freed to recommence translation, which seems to be the essential function of trans-translation. In Streptococcus pneumoniae (strain Hungary19A-6), this protein is SsrA-binding protein.